The sequence spans 787 residues: Filamentous growth regulator 27 (787 aa).

Positions 1–22 are disordered; sequence MSAPIVETKKASKRRIRRIPDD. The segment at residues 31 to 57 is a DNA-binding region (zn(2)-C6 fungal-type); it reads CDNCKKRKFKCSGEKPCFECSKKGHDC. The stretch at 69–97 forms a coiled coil; that stretch reads GERMAKLKQKKDNNEKQRELVNEQIAQSS. Disordered stretches follow at residues 120-140 and 200-221; these read SSHSTVSGNDSYHLSSSSSIP and RHKSEEPDMDNNTNNVPKKGGI. Residues 209–221 show a composition bias toward polar residues; it reads DNNTNNVPKKGGI.

The protein resides in the nucleus. Functionally, transcription factor involved in yeast cell adherence to silicone substrate, filamentous growth, and biofilm formation. The polypeptide is Filamentous growth regulator 27 (FGR27) (Candida albicans (strain SC5314 / ATCC MYA-2876) (Yeast)).